A 350-amino-acid chain; its full sequence is C5a anaphylatoxin chemotactic receptor 1 (350 aa).

The Extracellular portion of the chain corresponds to 1-37 (MDDMCSILTEEELSLYNITDCEFVKPGGLGPVLGPRH). N-linked (GlcNAc...) asparagine glycosylation is present at Asn17. The chain crosses the membrane as a helical span at residues 38 to 64 (LSALVFYGLVFLLGVPGNALVVWVTGF). The Cytoplasmic portion of the chain corresponds to 65–69 (RMPRS). The helical transmembrane segment at 70–93 (VTSLWFLNLALADLLCCLSLPLLM) threads the bilayer. The Extracellular portion of the chain corresponds to 94–110 (VPLAMDQHWPFGPVACK). Cysteines 109 and 187 form a disulfide. A helical transmembrane segment spans residues 111–132 (LLKGLLYLIMFCSVLLLVLISL). Residues 133-154 (DRFLLVSWPVWCQNWRRPRKAG) lie on the Cytoplasmic side of the membrane. Residues 155–174 (WVCVGVWLLALLGSIPQFVY) form a helical membrane-spanning segment. At 175–197 (VKEVQLSTSKSECLGLYTVASAW) the chain is on the extracellular side. Residues 198-223 (ANTTARFLVGFVLPFITIVTCHWVVY) traverse the membrane as a helical segment. The Cytoplasmic portion of the chain corresponds to 224–247 (SRARRGSGVGPGRVSEARSRRTLR). Residues 248-270 (VIVAVSLSFFLCWFPLHILDFLV) traverse the membrane as a helical segment. Topologically, residues 271 to 287 (LSTPRHSSHSANIQLAH) are extracellular. The helical transmembrane segment at 288-308 (TLALCLAYCNSCLNPLLYVCL) threads the bilayer. The Cytoplasmic portion of the chain corresponds to 309–350 (GRGFKQNINRSLRNMFNFATEESVTRQSMFKSTSERTQEMNM).

This sequence belongs to the G-protein coupled receptor 1 family. High expression in head, kidney and posterior kidney, lower levels in peripheral blood leukocytes and spleen, low expression in brain and gills, heart, intestine and very low expression in liver and muscle.

Its subcellular location is the cell membrane. In terms of biological role, receptor for the chemotactic and inflammatory peptide anaphylatoxin C5a. This receptor stimulates chemotaxis, granule enzyme release and superoxide anion production. The chain is C5a anaphylatoxin chemotactic receptor 1 (c5ar1) from Oncorhynchus mykiss (Rainbow trout).